We begin with the raw amino-acid sequence, 201 residues long: 3-isopropylmalate dehydratase small subunit (201 aa).

The protein belongs to the LeuD family. LeuD type 1 subfamily. In terms of assembly, heterodimer of LeuC and LeuD.

It catalyses the reaction (2R,3S)-3-isopropylmalate = (2S)-2-isopropylmalate. It functions in the pathway amino-acid biosynthesis; L-leucine biosynthesis; L-leucine from 3-methyl-2-oxobutanoate: step 2/4. In terms of biological role, catalyzes the isomerization between 2-isopropylmalate and 3-isopropylmalate, via the formation of 2-isopropylmaleate. The protein is 3-isopropylmalate dehydratase small subunit of Paracoccus denitrificans (strain Pd 1222).